Consider the following 486-residue polypeptide: Non-structural protein 1 (486 aa).

Residues 1 to 81 are RNA-binding; the sequence is MATFKDACYQ…CFLDDNPHLL (81 aa). The tract at residues 42–79 is zinc-binding domain; the sequence is CLDCCQYTDLTYCQGCLIYHVCEWCSQYSRCFLDDNPH. Positions 82-176 are important for cytoskeleton localization; the sequence is RMRTFRNEIT…INQTPFSFTN (95 aa). The interaction with host IRF3 stretch occupies residues 317-486; that stretch reads EVHNCKWCSI…EHDSGVSDVE (170 aa). Positions 479-483 match the IKBKB-like degron (ILD) motif motif; it reads DSGVS. The short motif at 480–483 is the pLxIS motif element; the sequence is SGVS.

It belongs to the rotavirus NSP1 family. In terms of assembly, interacts (via C-terminus) with host IRF3; this interaction leads to IRF3 degradation. Interacts with host IRF7; this interaction leads to IRF7 degradation. Interacts with host CUL1 and CUL3. Interacts with host BTRC. Post-translationally, the C-terminal region is phosphorylated by host CKII/CSNK2A1. Phosphorylation of the DSGXS motif is essential for host NF-kappa-B inhibition.

It is found in the host cytoplasm. The protein localises to the host cytoskeleton. Functionally, plays a role in the inhibition of host innate immunity by inducing the degradation of key host factors required to activate interferon production such as IRF3, IRF5 or IRF7. Associates with components of cullin RING ligases (CRLs) including CUL1 or CUL3, which are essential multisubunit ubiquitination complexes, to modulate their activities. Recognizes the host NF-kappa-B regulator BTRC through the presence of a DSGXS motif in the C-terminal substrate recognition domain. The sequence is that of Non-structural protein 1 from Rotavirus A (strain RVA/Human/Philippines/L26/1987/G12P1B[4]) (RV-A).